Consider the following 317-residue polypeptide: Methionyl-tRNA formyltransferase (317 aa).

Residue 110 to 113 coordinates (6S)-5,6,7,8-tetrahydrofolate; the sequence is SLLP.

This sequence belongs to the Fmt family.

The enzyme catalyses L-methionyl-tRNA(fMet) + (6R)-10-formyltetrahydrofolate = N-formyl-L-methionyl-tRNA(fMet) + (6S)-5,6,7,8-tetrahydrofolate + H(+). Attaches a formyl group to the free amino group of methionyl-tRNA(fMet). The formyl group appears to play a dual role in the initiator identity of N-formylmethionyl-tRNA by promoting its recognition by IF2 and preventing the misappropriation of this tRNA by the elongation apparatus. The polypeptide is Methionyl-tRNA formyltransferase (Bacillus pumilus (strain SAFR-032)).